We begin with the raw amino-acid sequence, 69 residues long: Small ribosomal subunit protein bS21 (69 aa).

It belongs to the bacterial ribosomal protein bS21 family.

The protein is Small ribosomal subunit protein bS21 of Borrelia duttonii (strain Ly).